The following is a 157-amino-acid chain: Lipoprotein signal peptidase (157 aa).

The next 3 membrane-spanning stretches (helical) occupy residues 10-30 (LVFM…KYAI), 58-78 (FLEG…FIFL), and 84-104 (LFKN…SNVL). Catalysis depends on residues Asp-114 and Asp-131. A helical transmembrane segment spans residues 122–142 (FDFAIFNFADVMIDVGVGVLL).

This sequence belongs to the peptidase A8 family.

The protein localises to the cell inner membrane. It catalyses the reaction Release of signal peptides from bacterial membrane prolipoproteins. Hydrolyzes -Xaa-Yaa-Zaa-|-(S,diacylglyceryl)Cys-, in which Xaa is hydrophobic (preferably Leu), and Yaa (Ala or Ser) and Zaa (Gly or Ala) have small, neutral side chains.. It participates in protein modification; lipoprotein biosynthesis (signal peptide cleavage). This protein specifically catalyzes the removal of signal peptides from prolipoproteins. The protein is Lipoprotein signal peptidase of Helicobacter pylori (strain ATCC 700392 / 26695) (Campylobacter pylori).